We begin with the raw amino-acid sequence, 513 residues long: ATP synthase subunit alpha 2 (513 aa).

169 to 176 (GDRQTGKT) contacts ATP.

It belongs to the ATPase alpha/beta chains family. F-type ATPases have 2 components, CF(1) - the catalytic core - and CF(0) - the membrane proton channel. CF(1) has five subunits: alpha(3), beta(3), gamma(1), delta(1), epsilon(1). CF(0) has three main subunits: a(1), b(2) and c(9-12). The alpha and beta chains form an alternating ring which encloses part of the gamma chain. CF(1) is attached to CF(0) by a central stalk formed by the gamma and epsilon chains, while a peripheral stalk is formed by the delta and b chains.

It localises to the cell inner membrane. The catalysed reaction is ATP + H2O + 4 H(+)(in) = ADP + phosphate + 5 H(+)(out). Functionally, produces ATP from ADP in the presence of a proton gradient across the membrane. The alpha chain is a regulatory subunit. This is ATP synthase subunit alpha 2 from Photobacterium profundum (strain SS9).